We begin with the raw amino-acid sequence, 681 residues long: Rabphilin-3A (681 aa).

Residues 1-21 (MTDTVVNRWMYPGDGPLQSND) form a disordered region. The RabBD domain maps to 40 to 157 (QRKQEELTDE…KRSGAWFFKG (118 aa)). The segment at 88–145 (GDGVNRCILCGEQLGMLGSACVVCEDCKKNVCTKCGVETSNNRPHPVWLCKICLEQRE) adopts an FYVE-type zinc-finger fold. Zn(2+)-binding residues include C94, C97, C111, C114, C119, C122, C137, and C140. The disordered stretch occupies residues 162 to 375 (VLPQPMPIKK…EEEANSYDSD (214 aa)). Residues 199–208 (ARGDMEDRRP) show a composition bias toward basic and acidic residues. Position 223 is an omega-N-methylarginine (R223). The segment covering 243 to 252 (RDSEGWDHAH) has biased composition (basic and acidic residues). Residue S271 is modified to Phosphoserine. The segment covering 278-296 (APAPVPSPAPPQPVQPGPP) has biased composition (pro residues). The segment covering 347-356 (AAPYSQAAPA) has biased composition (low complexity). A compositionally biased stretch (acidic residues) spans 362-375 (AEEEEEEANSYDSD). Residues 379–501 (TLGALEFSLL…KANQRKNFNI (123 aa)) enclose the C2 1 domain. M409, D410, D416, D471, E472, D473, E479, E526, D568, D574, D628, Y629, D630, and D636 together coordinate Ca(2+). The C2 2 domain occupies 537–670 (ERGKILVSLM…NKDKKIERWH (134 aa)). 2 positions are modified to phosphoserine: S679 and S680.

As to quaternary structure, interacts with RAB3B, RAB3C, RAB3D, RAB8A, RAB27A and RAB27B. Interacts with RAB3A; this interaction recruits RPH3A to synaptic vesicules. Interacts (via C2B domain) with SNAP25. Interacts with deubiquitinating enzyme CAND1; this interaction results in the deubiquitination of RPH3A. Interacts with GRIN2A and DLG4; this ternary complex regulates NMDA receptor composition at postsynaptic membranes. Interacts with SNCA. The cofactor is Ca(2+). Ubiquitinated. Deubiquitinated by CAND1 to prevent its degradation. As to expression, specifically expressed in brain.

It is found in the cytoplasmic vesicle. The protein localises to the secretory vesicle. The protein resides in the synaptic vesicle membrane. Its subcellular location is the cell projection. It localises to the dendritic spine. It is found in the postsynaptic cell membrane. The protein localises to the membrane. Plays an essential role in docking and fusion steps of regulated exocytosis. At the presynaptic level, RPH3A is recruited by RAB3A to the synaptic vesicle membrane in a GTP-dependent manner where it modulates synaptic vesicle trafficking and calcium-triggered neurotransmitter release. In the post-synaptic compartment, forms a ternary complex with GRIN2A and DLG4 and regulates NMDA receptor stability. Also plays a role in the exocytosis of arginine vasopressin hormone. The polypeptide is Rabphilin-3A (Rph3a) (Mus musculus (Mouse)).